Here is a 369-residue protein sequence, read N- to C-terminus: tRNA 2-selenouridine synthase (369 aa).

A Rhodanese domain is found at 15 to 138 (MLSGHPMMDV…MRQYLIEVID (124 aa)). Cysteine 98 acts as the S-selanylcysteine intermediate in catalysis.

It belongs to the SelU family. In terms of assembly, monomer.

It carries out the reaction 5-methylaminomethyl-2-thiouridine(34) in tRNA + selenophosphate + (2E)-geranyl diphosphate + H2O + H(+) = 5-methylaminomethyl-2-selenouridine(34) in tRNA + (2E)-thiogeraniol + phosphate + diphosphate. The enzyme catalyses 5-methylaminomethyl-2-thiouridine(34) in tRNA + (2E)-geranyl diphosphate = 5-methylaminomethyl-S-(2E)-geranyl-thiouridine(34) in tRNA + diphosphate. It catalyses the reaction 5-methylaminomethyl-S-(2E)-geranyl-thiouridine(34) in tRNA + selenophosphate + H(+) = 5-methylaminomethyl-2-(Se-phospho)selenouridine(34) in tRNA + (2E)-thiogeraniol. The catalysed reaction is 5-methylaminomethyl-2-(Se-phospho)selenouridine(34) in tRNA + H2O = 5-methylaminomethyl-2-selenouridine(34) in tRNA + phosphate. Its function is as follows. Involved in the post-transcriptional modification of the uridine at the wobble position (U34) of tRNA(Lys), tRNA(Glu) and tRNA(Gln). Catalyzes the conversion of 2-thiouridine (S2U-RNA) to 2-selenouridine (Se2U-RNA). Acts in a two-step process involving geranylation of 2-thiouridine (S2U) to S-geranyl-2-thiouridine (geS2U) and subsequent selenation of the latter derivative to 2-selenouridine (Se2U) in the tRNA chain. This chain is tRNA 2-selenouridine synthase, found in Shewanella sediminis (strain HAW-EB3).